A 335-amino-acid polypeptide reads, in one-letter code: MLRLSLLRSTATLPVKCQRRGLILPAAAMYTLGSLIFGKEARLADAMERGELHNKNVDYAKEAEERTELRIRALANTRSMEPRYNGHVPLHRYEKLLLFAISGWNSFFHPEDGYNIVQLGEATALPVFLENLKQTMLSDSSGRRILKEQPNITTEILHMDKLAKLPHNTFGYVYYQWLKRENVSPDTRAPVKFIDDPMHAYIFKRYRQCHDFYHAITNMPIIIEGEITIKALEGANLGVPMAILGGILAPLRLKKVQRKRLYNIYLPWAVRTGLSCKPLINVYWEEMLEKDVTALRKELKITLPPDLRTMRKERAALRKEIDAKYNSQKRATTPA.

The transit peptide at 1–10 directs the protein to the mitochondrion; it reads MLRLSLLRST. Zn(2+) is bound by residues His210, Asp211, His214, and Glu226.

This sequence belongs to the COQ4 family. In terms of assembly, component of a multi-subunit COQ enzyme complex, composed of at least COQ3, COQ4, COQ5, COQ6, COQ7 and COQ9. Interacts with COQ3. The cofactor is Zn(2+).

The protein localises to the mitochondrion inner membrane. The catalysed reaction is 4-hydroxy-3-methoxy-5-(all-trans-hexaprenyl)benzoate + H(+) = 2-methoxy-6-(all-trans-hexaprenyl)phenol + CO2. The protein operates within cofactor biosynthesis; ubiquinone biosynthesis. Its function is as follows. Lyase that catalyzes the C1-decarboxylation of 4-hydroxy-3-methoxy-5-(all-trans-hexaprenyl)benzoic acid into 2-methoxy-6-(all-trans-hexaprenyl)phenol during ubiquinone biosynthesis. This Saccharomyces cerevisiae (strain YJM789) (Baker's yeast) protein is Ubiquinone biosynthesis protein COQ4, mitochondrial.